A 219-amino-acid chain; its full sequence is Probable octanoyltransferase (219 aa).

Residues 43–219 form the BPL/LPL catalytic domain; it reads QPPKPTIITS…NNLDSFLMSK (177 aa). Residues 83–90, 151–153, and 164–166 each bind substrate; these read RGGQTTFH, AIG, and GLA. Catalysis depends on cysteine 182, which acts as the Acyl-thioester intermediate.

The protein belongs to the LipB family.

The enzyme catalyses octanoyl-[ACP] + L-lysyl-[protein] = N(6)-octanoyl-L-lysyl-[protein] + holo-[ACP] + H(+). Its pathway is protein modification; protein lipoylation via endogenous pathway; protein N(6)-(lipoyl)lysine from octanoyl-[acyl-carrier-protein]: step 1/2. Catalyzes the transfer of endogenously produced octanoic acid from octanoyl-acyl-carrier-protein onto the lipoyl domains of lipoate-dependent enzymes. Lipoyl-ACP can also act as a substrate although octanoyl-ACP is likely to be the physiological substrate. The sequence is that of Probable octanoyltransferase from Schizosaccharomyces pombe (strain 972 / ATCC 24843) (Fission yeast).